Consider the following 244-residue polypeptide: MPDMSQLKELPFSTLQFYATAPYPCSYLPGRQARSQVAAPGHLINAGTYSQLVEQGFRRSGLFTYRPHCDNCHACVPVRVDAARFEPNRTQRRAWRSHQALRAFVAELAWSPEHYDLYTRYQQGRHPGGGMDEDSRTQYAQFLLTTRVNTRLVEFRAPQGQLAMISIIDVLDDGLSSVYTFYDPDMAGSLGTYSILWQIEQCRTLDLPWLYLGYWIADSRKMAYKANFRPLQMHVDGAWRETPP.

This sequence belongs to the R-transferase family. Bpt subfamily.

The protein localises to the cytoplasm. The catalysed reaction is N-terminal L-glutamyl-[protein] + L-leucyl-tRNA(Leu) = N-terminal L-leucyl-L-glutamyl-[protein] + tRNA(Leu) + H(+). It catalyses the reaction N-terminal L-aspartyl-[protein] + L-leucyl-tRNA(Leu) = N-terminal L-leucyl-L-aspartyl-[protein] + tRNA(Leu) + H(+). Functionally, functions in the N-end rule pathway of protein degradation where it conjugates Leu from its aminoacyl-tRNA to the N-termini of proteins containing an N-terminal aspartate or glutamate. The sequence is that of Aspartate/glutamate leucyltransferase from Bordetella bronchiseptica (strain ATCC BAA-588 / NCTC 13252 / RB50) (Alcaligenes bronchisepticus).